A 73-amino-acid chain; its full sequence is Large ribosomal subunit protein bL31 (73 aa).

It belongs to the bacterial ribosomal protein bL31 family. Type A subfamily. In terms of assembly, part of the 50S ribosomal subunit. Contacts protein L9.

In terms of biological role, binds the 23S rRNA and interacts with the tRNA in the E site. This Deinococcus radiodurans (strain ATCC 13939 / DSM 20539 / JCM 16871 / CCUG 27074 / LMG 4051 / NBRC 15346 / NCIMB 9279 / VKM B-1422 / R1) protein is Large ribosomal subunit protein bL31 (rpmE).